Consider the following 83-residue polypeptide: Late seed maturation protein P8B6 (83 aa).

Basic and acidic residues-rich tracts occupy residues 1 to 18 and 37 to 51; these read MASQ…KKGE and AEGR…KEQL. The interval 1 to 83 is disordered; the sequence is MASQQEKKQL…DAEDEPSTRT (83 aa). Residues 73–83 show a composition bias toward acidic residues; the sequence is EDAEDEPSTRT.

Belongs to the small hydrophilic plant seed protein family.

The protein resides in the cytoplasm. This protein may play a role in equipping the seed for survival, maintaining a minimal level of hydration in the dry organism and preventing the denaturation of cytoplasmic components, or may play a role during imbibition by controlling water uptake. This chain is Late seed maturation protein P8B6, found in Raphanus sativus (Radish).